A 377-amino-acid chain; its full sequence is Putative FBD-associated F-box protein At5g44940 (377 aa).

The region spanning 4-50 (FDYISEFPDCLLTQILLNLPTKDSVKTSVLSKRWRNLWLNVPGLRLR) is the F-box domain. The 50-residue stretch at 297 to 346 (IDFHKVPQCLISTLEYVQIEELILKEKSGIKLVDYFLENSAVLKKLTLSF) folds into the FBD domain.

The chain is Putative FBD-associated F-box protein At5g44940 from Arabidopsis thaliana (Mouse-ear cress).